The chain runs to 37 residues: Large ribosomal subunit protein bL36 (37 aa).

The protein belongs to the bacterial ribosomal protein bL36 family.

The chain is Large ribosomal subunit protein bL36 from Vesicomyosocius okutanii subsp. Calyptogena okutanii (strain HA).